The sequence spans 174 residues: Nicotinamide-nucleotide adenylyltransferase (174 aa).

It belongs to the archaeal NMN adenylyltransferase family.

Its subcellular location is the cytoplasm. It catalyses the reaction beta-nicotinamide D-ribonucleotide + ATP + H(+) = diphosphate + NAD(+). It functions in the pathway cofactor biosynthesis; NAD(+) biosynthesis; NAD(+) from nicotinamide D-ribonucleotide: step 1/1. This is Nicotinamide-nucleotide adenylyltransferase from Methanospirillum hungatei JF-1 (strain ATCC 27890 / DSM 864 / NBRC 100397 / JF-1).